A 998-amino-acid chain; its full sequence is Bifunctional glutamine synthetase adenylyltransferase/adenylyl-removing enzyme (998 aa).

Residues 1 to 487 (MVVTKPATQR…LHAKLFYQPL (487 aa)) are adenylyl removase. The interval 492-998 (GPAGLEIRHG…KAVVCKVFGS (507 aa)) is adenylyl transferase.

Belongs to the GlnE family. It depends on Mg(2+) as a cofactor.

It carries out the reaction [glutamine synthetase]-O(4)-(5'-adenylyl)-L-tyrosine + phosphate = [glutamine synthetase]-L-tyrosine + ADP. It catalyses the reaction [glutamine synthetase]-L-tyrosine + ATP = [glutamine synthetase]-O(4)-(5'-adenylyl)-L-tyrosine + diphosphate. Its function is as follows. Involved in the regulation of glutamine synthetase GlnA, a key enzyme in the process to assimilate ammonia. When cellular nitrogen levels are high, the C-terminal adenylyl transferase (AT) inactivates GlnA by covalent transfer of an adenylyl group from ATP to specific tyrosine residue of GlnA, thus reducing its activity. Conversely, when nitrogen levels are low, the N-terminal adenylyl removase (AR) activates GlnA by removing the adenylyl group by phosphorolysis, increasing its activity. The regulatory region of GlnE binds the signal transduction protein PII (GlnB) which indicates the nitrogen status of the cell. In Mycolicibacterium paratuberculosis (strain ATCC BAA-968 / K-10) (Mycobacterium paratuberculosis), this protein is Bifunctional glutamine synthetase adenylyltransferase/adenylyl-removing enzyme.